Consider the following 20-residue polypeptide: Serum amyloid P-component (20 aa).

Residues Z1 to I20 form the Pentraxin (PTX) domain.

It belongs to the pentraxin family. Homopentamer. Pentraxin (or pentaxin) have a discoid arrangement of 5 non-covalently bound subunits.

The protein localises to the secreted. This is Serum amyloid P-component from Pleuronectes platessa (European plaice).